Here is a 268-residue protein sequence, read N- to C-terminus: Hydroxyethylthiazole kinase (268 aa).

Residue Met-45 coordinates substrate. Residues Arg-121 and Thr-167 each contribute to the ATP site. Gly-194 provides a ligand contact to substrate.

Belongs to the Thz kinase family. The cofactor is Mg(2+).

The catalysed reaction is 5-(2-hydroxyethyl)-4-methylthiazole + ATP = 4-methyl-5-(2-phosphooxyethyl)-thiazole + ADP + H(+). It functions in the pathway cofactor biosynthesis; thiamine diphosphate biosynthesis; 4-methyl-5-(2-phosphoethyl)-thiazole from 5-(2-hydroxyethyl)-4-methylthiazole: step 1/1. Its function is as follows. Catalyzes the phosphorylation of the hydroxyl group of 4-methyl-5-beta-hydroxyethylthiazole (THZ). This is Hydroxyethylthiazole kinase from Bacillus cereus (strain ATCC 10987 / NRS 248).